The following is a 197-amino-acid chain: ATP synthase subunit delta (197 aa).

Positions 1–16 (MSSAVSASPQAASPQQ) are enriched in low complexity. The interval 1–20 (MSSAVSASPQAASPQQDRTS) is disordered.

This sequence belongs to the ATPase delta chain family. F-type ATPases have 2 components, F(1) - the catalytic core - and F(0) - the membrane proton channel. F(1) has five subunits: alpha(3), beta(3), gamma(1), delta(1), epsilon(1). F(0) has three main subunits: a(1), b(2) and c(10-14). The alpha and beta chains form an alternating ring which encloses part of the gamma chain. F(1) is attached to F(0) by a central stalk formed by the gamma and epsilon chains, while a peripheral stalk is formed by the delta and b chains.

The protein resides in the cell inner membrane. F(1)F(0) ATP synthase produces ATP from ADP in the presence of a proton or sodium gradient. F-type ATPases consist of two structural domains, F(1) containing the extramembraneous catalytic core and F(0) containing the membrane proton channel, linked together by a central stalk and a peripheral stalk. During catalysis, ATP synthesis in the catalytic domain of F(1) is coupled via a rotary mechanism of the central stalk subunits to proton translocation. Functionally, this protein is part of the stalk that links CF(0) to CF(1). It either transmits conformational changes from CF(0) to CF(1) or is implicated in proton conduction. This chain is ATP synthase subunit delta, found in Acidiphilium cryptum (strain JF-5).